The primary structure comprises 281 residues: ATP phosphoribosyltransferase (281 aa).

This sequence belongs to the ATP phosphoribosyltransferase family. Long subfamily. It depends on Mg(2+) as a cofactor.

It is found in the cytoplasm. The catalysed reaction is 1-(5-phospho-beta-D-ribosyl)-ATP + diphosphate = 5-phospho-alpha-D-ribose 1-diphosphate + ATP. It participates in amino-acid biosynthesis; L-histidine biosynthesis; L-histidine from 5-phospho-alpha-D-ribose 1-diphosphate: step 1/9. With respect to regulation, feedback inhibited by histidine. Catalyzes the condensation of ATP and 5-phosphoribose 1-diphosphate to form N'-(5'-phosphoribosyl)-ATP (PR-ATP). Has a crucial role in the pathway because the rate of histidine biosynthesis seems to be controlled primarily by regulation of HisG enzymatic activity. This chain is ATP phosphoribosyltransferase, found in Corynebacterium aurimucosum (strain ATCC 700975 / DSM 44827 / CIP 107346 / CN-1) (Corynebacterium nigricans).